We begin with the raw amino-acid sequence, 361 residues long: Fructose-bisphosphate aldolase (361 aa).

Position 2 is an N-acetylthreonine (threonine 2). Residues arginine 56 and lysine 147 each coordinate substrate. Glutamate 188 serves as the catalytic Proton acceptor. The Schiff-base intermediate with dihydroxyacetone-P role is filled by lysine 230.

It belongs to the class I fructose-bisphosphate aldolase family. In terms of assembly, homotetramer. As to expression, mainly expressed in the heads and partly in the thoraxes of adult flies. In terms of tissue distribution, expressed in all adult tissues. The Alpha-beta mRNA shows strong expression in the abdomens of adults. Mainly expressed in adult abdominal regions and is also expressed in lesser amounts in other parts of the body. The Beta-gamma mRNA is expressed in adult heads.

The catalysed reaction is beta-D-fructose 1,6-bisphosphate = D-glyceraldehyde 3-phosphate + dihydroxyacetone phosphate. It functions in the pathway carbohydrate degradation; glycolysis; D-glyceraldehyde 3-phosphate and glycerone phosphate from D-glucose: step 4/4. In terms of biological role, enzyme of the glycolytic pathway. Glycolysis is essential in glial cells but not in neurons; neurons rely on the citric acid cycle for their energy needs, and on lactate and alanine secreted into the hemolymph by glial cells to fuel it. May take part in developmental stage-specific or tissue -specific sugar-phosphate metabolisms. Protein acts on two substrates fructose 1,6-bisphosphate and fructose 1-phosphate (like other class I aldolases). This chain is Fructose-bisphosphate aldolase, found in Drosophila melanogaster (Fruit fly).